The chain runs to 76 residues: Kappa-actitoxin-Avd4a (76 aa).

The signal sequence occupies residues 1 to 19 (MNKALFLCLVVLCAAVVFA). Residues 20 to 31 (AEDLQKAKHAPF) constitute a propeptide that is removed on maturation. Disulfide bonds link Cys37–Cys72, Cys39–Cys65, and Cys55–Cys73.

Belongs to the sea anemone type 3 (BDS) potassium channel toxin family. Highly expressed in the ectodermal tissue from the distal and proximal tentacles, body wall, and oral disk.

It is found in the secreted. It localises to the nematocyst. Its function is as follows. Acts as a gating modifier on both Kv and Nav ion channels, and also acts on blood pressure. Voltage-dependently inhibits voltage-gated potassium channels Kv3 (Kv3.1/KCNC1, Kv3.2/KCNC2 and Kv3.4/KCNC4) and slows inactivation of the voltage-gated sodium channel Nav1.7/SCN9A. Inhibits all Kv3.1, Kv3.2 and Kv3.4 by about 50% when tested at a voltage of +40 mV (45%, 48% and 56%, respectively). May act by binding residues in voltage-sensing domains S3b and S4 of Kv3. On sodium channels, tests have been done on human Nav1.7/SCN9A (expressed in HEK293 cells) (EC(50)=3 nM) and rat SCG neurons that mostly carry Nav1.7 channels (EC(50)=300 nM). This toxin also reduces blood pressure. The polypeptide is Kappa-actitoxin-Avd4a (Anemonia viridis (Snakelocks anemone)).